The chain runs to 677 residues: Methionine--tRNA ligase (677 aa).

The short motif at 15 to 25 (PYANGSIHLGH) is the 'HIGH' region element. Zn(2+) is bound by residues C146, C149, C159, and C162. Positions 333–337 (KMSKS) match the 'KMSKS' region motif. Residue K336 participates in ATP binding. In terms of domain architecture, tRNA-binding spans 575-677 (DFAKVDLRVA…AGAKPGHQVK (103 aa)).

Belongs to the class-I aminoacyl-tRNA synthetase family. MetG type 1 subfamily. In terms of assembly, homodimer. Zn(2+) serves as cofactor.

It localises to the cytoplasm. It catalyses the reaction tRNA(Met) + L-methionine + ATP = L-methionyl-tRNA(Met) + AMP + diphosphate. Is required not only for elongation of protein synthesis but also for the initiation of all mRNA translation through initiator tRNA(fMet) aminoacylation. This is Methionine--tRNA ligase (metG) from Escherichia coli (strain K12).